Consider the following 377-residue polypeptide: Anhydro-N-acetylmuramic acid kinase (377 aa).

18 to 25 (GTSADGID) is an ATP binding site.

The protein belongs to the anhydro-N-acetylmuramic acid kinase family.

The catalysed reaction is 1,6-anhydro-N-acetyl-beta-muramate + ATP + H2O = N-acetyl-D-muramate 6-phosphate + ADP + H(+). The protein operates within amino-sugar metabolism; 1,6-anhydro-N-acetylmuramate degradation. It participates in cell wall biogenesis; peptidoglycan recycling. Functionally, catalyzes the specific phosphorylation of 1,6-anhydro-N-acetylmuramic acid (anhMurNAc) with the simultaneous cleavage of the 1,6-anhydro ring, generating MurNAc-6-P. Is required for the utilization of anhMurNAc either imported from the medium or derived from its own cell wall murein, and thus plays a role in cell wall recycling. The protein is Anhydro-N-acetylmuramic acid kinase of Xanthomonas campestris pv. campestris (strain 8004).